Here is a 178-residue protein sequence, read N- to C-terminus: Riboflavin kinase (178 aa).

Mg(2+) contacts are provided by T39 and N41. Residue E116 is the Nucleophile of the active site.

The protein belongs to the flavokinase family. Zn(2+) is required as a cofactor. It depends on Mg(2+) as a cofactor.

The enzyme catalyses riboflavin + ATP = FMN + ADP + H(+). It functions in the pathway cofactor biosynthesis; FMN biosynthesis; FMN from riboflavin (ATP route): step 1/1. Catalyzes the phosphorylation of riboflavin (vitamin B2) to form flavin mononucleotide (FMN) coenzyme. The chain is Riboflavin kinase (FMN1) from Scheffersomyces stipitis (strain ATCC 58785 / CBS 6054 / NBRC 10063 / NRRL Y-11545) (Yeast).